The sequence spans 480 residues: Iroquois-class homeodomain protein IRX-1 (480 aa).

Residues 127-189 constitute a DNA-binding region (homeobox; TALE-type); sequence DPGRPKNATR…NARRRLKKEN (63 aa). Disordered stretches follow at residues 190–285, 318–354, and 401–480; these read KVTW…LGLV, SLAETATSPDGAPKASPPPPSSHASAHGPPSGSPLQH, and PHGP…LPSA. Residues 210 to 232 are compositionally biased toward acidic residues; it reads TEGDPEKAEDDEEIDLESIDIDQ. Phosphoserine is present on S241. Over residues 254–263 the composition is skewed to low complexity; it reads ARVAPPASAR. The segment covering 264 to 280 has biased composition (polar residues); that stretch reads DQSSPLSAAETLKSQDS. Low complexity predominate over residues 339-351; the sequence is SHASAHGPPSGSP.

Belongs to the TALE/IRO homeobox family. As to expression, expressed in specific and overlapping patterns with Irx1 and Irx2 in the developing and adult metanephric kidney. In the adult metanephros, renal expression is found in the loop of Henle in the S3 proximal tubule segment and in the thick ascending limb (TAL) of the distal tubule.

Its subcellular location is the nucleus. In Mus musculus (Mouse), this protein is Iroquois-class homeodomain protein IRX-1 (Irx1).